Here is a 293-residue protein sequence, read N- to C-terminus: 4-hydroxy-tetrahydrodipicolinate synthase (293 aa).

Residue Thr45 coordinates pyruvate. Tyr133 serves as the catalytic Proton donor/acceptor. Lys162 functions as the Schiff-base intermediate with substrate in the catalytic mechanism. Position 204 (Ile204) interacts with pyruvate.

This sequence belongs to the DapA family. Homotetramer; dimer of dimers.

Its subcellular location is the cytoplasm. The enzyme catalyses L-aspartate 4-semialdehyde + pyruvate = (2S,4S)-4-hydroxy-2,3,4,5-tetrahydrodipicolinate + H2O + H(+). The protein operates within amino-acid biosynthesis; L-lysine biosynthesis via DAP pathway; (S)-tetrahydrodipicolinate from L-aspartate: step 3/4. Catalyzes the condensation of (S)-aspartate-beta-semialdehyde [(S)-ASA] and pyruvate to 4-hydroxy-tetrahydrodipicolinate (HTPA). The sequence is that of 4-hydroxy-tetrahydrodipicolinate synthase from Brucella suis biovar 1 (strain 1330).